The following is a 504-amino-acid chain: Lysine--tRNA ligase (504 aa).

Mg(2+) is bound by residues glutamate 411 and glutamate 418.

Belongs to the class-II aminoacyl-tRNA synthetase family. As to quaternary structure, homodimer. It depends on Mg(2+) as a cofactor.

The protein localises to the cytoplasm. The catalysed reaction is tRNA(Lys) + L-lysine + ATP = L-lysyl-tRNA(Lys) + AMP + diphosphate. The sequence is that of Lysine--tRNA ligase from Clostridium botulinum (strain Loch Maree / Type A3).